Consider the following 399-residue polypeptide: Tyrosine--tRNA ligase (399 aa).

A 'HIGH' region motif is present at residues 42–51 (PTAPDIHLGH). Positions 226–230 (KMSKS) match the 'KMSKS' region motif. K229 lines the ATP pocket. The 62-residue stretch at 337 to 398 (LTIGYILQRA…GKRRFAKVKV (62 aa)) folds into the S4 RNA-binding domain.

This sequence belongs to the class-I aminoacyl-tRNA synthetase family. TyrS type 2 subfamily. In terms of assembly, homodimer.

It localises to the cytoplasm. It carries out the reaction tRNA(Tyr) + L-tyrosine + ATP = L-tyrosyl-tRNA(Tyr) + AMP + diphosphate + H(+). Catalyzes the attachment of tyrosine to tRNA(Tyr) in a two-step reaction: tyrosine is first activated by ATP to form Tyr-AMP and then transferred to the acceptor end of tRNA(Tyr). In Coxiella burnetii (strain RSA 493 / Nine Mile phase I), this protein is Tyrosine--tRNA ligase.